We begin with the raw amino-acid sequence, 241 residues long: MVSPVTVVKSEGPKLVPFFKATCVYFVLWLPSSSPSWVSALIKCLPIFCLWLFLLAHGVRFLLAHPSASLIFVGLVFSAVGDAFLIWQDHGYFEHGLLMFAVAHILYAAAFGMRPLALRTGLVIGVLSGLCYALLYPGLSGAFTYLVGVYVALISFMGWRAMAGLRLVGAAWRWTELAAGGGALLFILSDLTIALNKFCFPVPYSRALIMSTYYAAQMLIALSAVESREPVGEDYRLSKAD.

Residues 1 to 13 (MVSPVTVVKSEGP) are Cytoplasmic-facing. A helical transmembrane segment spans residues 14 to 30 (KLVPFFKATCVYFVLWL). Over 31–36 (PSSSPS) the chain is Extracellular. The chain crosses the membrane as a helical span at residues 37–59 (WVSALIKCLPIFCLWLFLLAHGV). Residues 60 to 67 (RFLLAHPS) lie on the Cytoplasmic side of the membrane. Residues 68-87 (ASLIFVGLVFSAVGDAFLIW) form a helical membrane-spanning segment. Residues 88–96 (QDHGYFEHG) lie on the Extracellular side of the membrane. Residues 97–113 (LLMFAVAHILYAAAFGM) form a helical membrane-spanning segment. The Cytoplasmic segment spans residues 114 to 119 (RPLALR). A helical membrane pass occupies residues 120–136 (TGLVIGVLSGLCYALLY). Topologically, residues 137–142 (PGLSGA) are extracellular. A helical membrane pass occupies residues 143–159 (FTYLVGVYVALISFMGW). Residues 160–176 (RAMAGLRLVGAAWRWTE) are Cytoplasmic-facing. A helical transmembrane segment spans residues 177-195 (LAAGGGALLFILSDLTIAL). The Extracellular portion of the chain corresponds to 196 to 206 (NKFCFPVPYSR). Residues 207 to 225 (ALIMSTYYAAQMLIALSAV) traverse the membrane as a helical segment. Over 226–241 (ESREPVGEDYRLSKAD) the chain is Cytoplasmic.

The protein belongs to the TMEM86 family. As to expression, highly expressed in the jejunum, white adipose tissue, kidney and macrophages.

Its subcellular location is the endoplasmic reticulum membrane. The enzyme catalyses a 1-O-(1Z-alkenyl)-sn-glycero-3-phosphocholine + H2O = a 2,3-saturated aldehyde + sn-glycerol 3-phosphocholine. It carries out the reaction a 1-O-(1Z-alkenyl)-sn-glycero-3-phosphoethanolamine + H2O = a 2,3-saturated aldehyde + sn-glycero-3-phosphoethanolamine. Functionally, catalyzes the hydrolysis of the vinyl ether bond of choline or ethanolamine lysoplasmalogens, forming fatty aldehyde and glycerophosphocholine or glycerophosphoethanolamine, respectively and is specific for the sn-2-deacylated (lyso) form of plasmalogen. Plays an important role in lysoplasmalogen metabolism in the adipocyte tissue and macrophages. The polypeptide is Lysoplasmalogenase TMEM86A (Tmem86a) (Mus musculus (Mouse)).